Reading from the N-terminus, the 237-residue chain is uncharacterized protein (237 aa).

Belongs to the bactofilin family.

This is an uncharacterized protein from Bacillus subtilis (strain 168).